A 244-amino-acid chain; its full sequence is Putative lipoprotein LprA (244 aa).

A signal peptide spans 1–24 (MKHPPCSVVAAATAILAVVLAIGG). The N-palmitoyl cysteine moiety is linked to residue C25. A lipid anchor (S-diacylglycerol cysteine) is attached at C25.

This sequence belongs to the LppX/LprAFG lipoprotein family.

It is found in the cell membrane. In Mycobacterium tuberculosis (strain CDC 1551 / Oshkosh), this protein is Putative lipoprotein LprA (lprA).